Reading from the N-terminus, the 389-residue chain is NADH-quinone oxidoreductase subunit D (389 aa).

This sequence belongs to the complex I 49 kDa subunit family. As to quaternary structure, NDH-1 is composed of 14 different subunits. Subunits NuoB, C, D, E, F, and G constitute the peripheral sector of the complex.

The protein resides in the cell inner membrane. The enzyme catalyses a quinone + NADH + 5 H(+)(in) = a quinol + NAD(+) + 4 H(+)(out). Its function is as follows. NDH-1 shuttles electrons from NADH, via FMN and iron-sulfur (Fe-S) centers, to quinones in the respiratory chain. The immediate electron acceptor for the enzyme in this species is believed to be ubiquinone. Couples the redox reaction to proton translocation (for every two electrons transferred, four hydrogen ions are translocated across the cytoplasmic membrane), and thus conserves the redox energy in a proton gradient. In Rickettsia typhi (strain ATCC VR-144 / Wilmington), this protein is NADH-quinone oxidoreductase subunit D.